A 946-amino-acid chain; its full sequence is Bifunctional lysine-specific demethylase and histidyl-hydroxylase NO66 (946 aa).

The disordered stretch occupies residues 14 to 435 (YRGSATSKNY…TSAASKKNTV (422 aa)). Polar residues-rich tracts occupy residues 17 to 28 (SATSKNYVQKGT) and 37 to 46 (AKNNNRNLAS). Over residues 59–73 (SGSYSDGDNGSSSSS) the composition is skewed to low complexity. A compositionally biased stretch (polar residues) spans 99–110 (TLNNHSSQSSPE). A compositionally biased stretch (basic and acidic residues) spans 117–128 (ESLKRRNDEAEG). Residues 169 to 186 (TLNSHSSQSSPETPANTR) are compositionally biased toward polar residues. Residues 187 to 198 (ESLKRRTDEAEG) are compositionally biased toward basic and acidic residues. Residues 239–256 (TLNSHSYQSSPETPANTR) show a composition bias toward polar residues. A compositionally biased stretch (basic and acidic residues) spans 257–268 (ESLKRRTDEAEG). The residue at position 309 (threonine 309) is a Phosphothreonine. Residues 309–327 (TLNSHSSQSSPETPANTRE) show a composition bias toward polar residues. The span at 328–338 (SLNRRNYEAEG) shows a compositional bias: basic and acidic residues. Serine 339 bears the Phosphoserine mark. Over residues 379–397 (TLNSHSSQSSPETPANTRE) the composition is skewed to polar residues. A compositionally biased stretch (basic and acidic residues) spans 398–408 (SLNRRNYEAEG). Positions 416–433 (RTSSTPVGQSTSAASKKN) are enriched in polar residues. A JmjC domain is found at 606-742 (NPSSYLVQLR…NLMEKLMPLV (137 aa)). Residues histidine 646, aspartate 648, and histidine 708 each contribute to the Fe cation site.

Belongs to the ROX family. NO66 subfamily. The cofactor is Fe(2+).

It localises to the nucleus. The catalysed reaction is N(6),N(6)-dimethyl-L-lysyl(36)-[histone H3] + 2 2-oxoglutarate + 2 O2 = L-lysyl(36)-[histone H3] + 2 formaldehyde + 2 succinate + 2 CO2. Its function is as follows. Oxygenase that can act as both a histone lysine demethylase and a ribosomal histidine hydroxylase. Specifically demethylates 'Lys-4' (H3K4me) and 'Lys-36' (H3K36me) of histone H3, thereby playing a central role in histone code. The sequence is that of Bifunctional lysine-specific demethylase and histidyl-hydroxylase NO66 from Drosophila pseudoobscura pseudoobscura (Fruit fly).